Consider the following 95-residue polypeptide: Co-chaperonin GroES (95 aa).

The protein belongs to the GroES chaperonin family. Heptamer of 7 subunits arranged in a ring. Interacts with the chaperonin GroEL.

It is found in the cytoplasm. Its function is as follows. Together with the chaperonin GroEL, plays an essential role in assisting protein folding. The GroEL-GroES system forms a nano-cage that allows encapsulation of the non-native substrate proteins and provides a physical environment optimized to promote and accelerate protein folding. GroES binds to the apical surface of the GroEL ring, thereby capping the opening of the GroEL channel. The protein is Co-chaperonin GroES of Novosphingobium aromaticivorans (strain ATCC 700278 / DSM 12444 / CCUG 56034 / CIP 105152 / NBRC 16084 / F199).